Consider the following 388-residue polypeptide: MREYNLFTSESVSEGHPDKMADQISDAILDAILRQDLHARVACETLVKTGAVILAGEITTTANIDVERIVRDTVNGIGYHHSDLGFDGETCAVINMLGKQSPEIAQGVDRADPEEQGAGDQGLMFGYASNETEVLMPAPIEYAHRLMERQSELRRAGELPWLRPDAKAQITLKYDGSKPVAIDAVVLSTQHDPSISQADLQEAIMESIIKQVLPAELLHAGTRYHINPTGKFVIGGPVGDAGLTGRKIIVDTYGGMARHGGGAFSGKDPSKVDRSAAYAVRYVAKNIVAAGIADRCEVQVSYAIGVAEPTSISINTFGTNKISNDEIIRLIRTHFDLRPYGITRMLNLLQPMYQQTASFGHFGRQGSETAFTWEKIDKAEILKADAGL.

Residue His16 coordinates ATP. Asp18 lines the Mg(2+) pocket. Glu44 serves as a coordination point for K(+). Residues Glu57 and Gln100 each coordinate L-methionine. A flexible loop region spans residues 100-110; the sequence is QSPEIAQGVDR. Residues 165–167, 231–232, Asp240, 246–247, Ala263, and Lys267 contribute to the ATP site; these read DAK, KF, and RK. Asp240 lines the L-methionine pocket. Residue Lys271 participates in L-methionine binding.

The protein belongs to the AdoMet synthase family. Homotetramer; dimer of dimers. Mg(2+) serves as cofactor. Requires K(+) as cofactor.

It localises to the cytoplasm. The enzyme catalyses L-methionine + ATP + H2O = S-adenosyl-L-methionine + phosphate + diphosphate. It participates in amino-acid biosynthesis; S-adenosyl-L-methionine biosynthesis; S-adenosyl-L-methionine from L-methionine: step 1/1. Functionally, catalyzes the formation of S-adenosylmethionine (AdoMet) from methionine and ATP. The overall synthetic reaction is composed of two sequential steps, AdoMet formation and the subsequent tripolyphosphate hydrolysis which occurs prior to release of AdoMet from the enzyme. The protein is S-adenosylmethionine synthase of Psychrobacter arcticus (strain DSM 17307 / VKM B-2377 / 273-4).